A 120-amino-acid polypeptide reads, in one-letter code: Large ribosomal subunit protein uL18 (120 aa).

It belongs to the universal ribosomal protein uL18 family. Part of the 50S ribosomal subunit; part of the 5S rRNA/L5/L18/L25 subcomplex. Contacts the 5S and 23S rRNAs.

Functionally, this is one of the proteins that bind and probably mediate the attachment of the 5S RNA into the large ribosomal subunit, where it forms part of the central protuberance. The sequence is that of Large ribosomal subunit protein uL18 from Bacillus licheniformis (strain ATCC 14580 / DSM 13 / JCM 2505 / CCUG 7422 / NBRC 12200 / NCIMB 9375 / NCTC 10341 / NRRL NRS-1264 / Gibson 46).